We begin with the raw amino-acid sequence, 185 residues long: Acireductone dioxygenase (185 aa).

Histidine 101, histidine 103, glutamate 107, and histidine 145 together coordinate Fe(2+). 4 residues coordinate Ni(2+): histidine 101, histidine 103, glutamate 107, and histidine 145.

The protein belongs to the acireductone dioxygenase (ARD) family. As to quaternary structure, monomer. Requires Fe(2+) as cofactor. Ni(2+) is required as a cofactor.

The catalysed reaction is 1,2-dihydroxy-5-(methylsulfanyl)pent-1-en-3-one + O2 = 3-(methylsulfanyl)propanoate + CO + formate + 2 H(+). The enzyme catalyses 1,2-dihydroxy-5-(methylsulfanyl)pent-1-en-3-one + O2 = 4-methylsulfanyl-2-oxobutanoate + formate + 2 H(+). It functions in the pathway amino-acid biosynthesis; L-methionine biosynthesis via salvage pathway; L-methionine from S-methyl-5-thio-alpha-D-ribose 1-phosphate: step 5/6. Catalyzes 2 different reactions between oxygen and the acireductone 1,2-dihydroxy-3-keto-5-methylthiopentene (DHK-MTPene) depending upon the metal bound in the active site. Fe-containing acireductone dioxygenase (Fe-ARD) produces formate and 2-keto-4-methylthiobutyrate (KMTB), the alpha-ketoacid precursor of methionine in the methionine recycle pathway. Ni-containing acireductone dioxygenase (Ni-ARD) produces methylthiopropionate, carbon monoxide and formate, and does not lie on the methionine recycle pathway. The chain is Acireductone dioxygenase from Synechococcus sp. (strain RCC307).